Consider the following 206-residue polypeptide: MYSSVYLLLSIVFVGGSNAHDWDSFESHHSEPRLRTSNLDVGEYCATFHENYVYYCRGIWTAEKLLEHRSIMKKIGKFCPSYKSACVTRTRIDPEEERERKEDHKKELTDDVGDMAFDDLMRKLEKIVPCRPNCNVSVHPHCTRQCKCEYEYHRMQKWCKPPRIEERFKYFCRIWYMSCSTYIEELDPEMADAFVSQYANYGNYHG.

The polypeptide is Delta and osm-11 homolog protein 1 (dos-1) (Caenorhabditis elegans).